Reading from the N-terminus, the 158-residue chain is Protein-export protein SecB (158 aa).

The protein belongs to the SecB family. Homotetramer, a dimer of dimers. One homotetramer interacts with 1 SecA dimer.

It is found in the cytoplasm. Its function is as follows. One of the proteins required for the normal export of preproteins out of the cell cytoplasm. It is a molecular chaperone that binds to a subset of precursor proteins, maintaining them in a translocation-competent state. It also specifically binds to its receptor SecA. In Rhodopseudomonas palustris (strain BisB5), this protein is Protein-export protein SecB.